Here is a 257-residue protein sequence, read N- to C-terminus: tRNA (guanine-N(1)-)-methyltransferase (257 aa).

S-adenosyl-L-methionine is bound by residues Gly-112 and 136-141 (LGDYVL).

The protein belongs to the RNA methyltransferase TrmD family. As to quaternary structure, homodimer.

It is found in the cytoplasm. It catalyses the reaction guanosine(37) in tRNA + S-adenosyl-L-methionine = N(1)-methylguanosine(37) in tRNA + S-adenosyl-L-homocysteine + H(+). Specifically methylates guanosine-37 in various tRNAs. This is tRNA (guanine-N(1)-)-methyltransferase from Salinispora tropica (strain ATCC BAA-916 / DSM 44818 / JCM 13857 / NBRC 105044 / CNB-440).